The chain runs to 764 residues: MDHLNEATQGKEHSEMSNNVSDPKGPPAKIARLEQNGSPLGRGRLGSTGGKMQGVPLKHSGHLMKTNLRKGTMLPVFCVVEHYENAIEYDCKEEHAEFVLVRKDMLFNQLIEMALLSLGYSHSSAAQAKGLIQVGKWNPVPLSYVTDAPDATVADMLQDVYHVVTLKIQLHSCPKLEDLPPEQWSHTTVRNALKDLLKDMNQSSLAKECPLSQSMISSIVNSTYYANVSAAKCQEFGRWYKHFKKTKDMMVEMDSLSELSQQGANHVNFGQQPVPGNTAEQPPSPAQLSHGSQPSVRTPLPNLHPGLVSTPISPQLVNQQLVMAQLLNQQYAVNRLLAQQSLNQQYLNHPPPVSRSMNKPLEQQVSTNTEVSSEIYQWVRDELKRAGISQAVFARVAFNRTQGLLSEILRKEEDPKTASQSLLVNLRAMQNFLQLPEAERDRIYQDERERSLNAASAMGPAPLLSTPPSRPPQVKTATLATERNGKPENNTMNINASIYDEIQQEMKRAKVSQALFAKVAATKSQGWLCELLRWKEDPSPENRTLWENLSMIRRFLSLPQPERDAIYEQESNAVHHHGDRPPHIIHVPAEQIQQQQQQQQQQQQQQQPPPPPPQPQPQPQAGPRLPPRQPTVASSAESDEENRQKTRPRTKISVEALGILQSFIQDVGLYPDEEAIQTLSAQLDLPKYTIIKFFQNQRYYLKHHGKLKDNSGLEVDVAEYKDEELLKDLEESVQDKNANTLFSVKLEEELSVEGSTDVNADLKD.

Positions 1–15 are enriched in basic and acidic residues; that stretch reads MDHLNEATQGKEHSE. Residues 1 to 56 form a disordered region; sequence MDHLNEATQGKEHSEMSNNVSDPKGPPAKIARLEQNGSPLGRGRLGSTGGKMQGVP. Positions 20 to 40 match the Nuclear localization signal motif; sequence VSDPKGPPAKIARLEQNGSPL. The span at 43-52 shows a compositional bias: gly residues; the sequence is GRLGSTGGKM. Lys51 participates in a covalent cross-link: Glycyl lysine isopeptide (Lys-Gly) (interchain with G-Cter in SUMO2). A CMP domain is found at 71-172; sequence GTMLPVFCVV…VVTLKIQLHS (102 aa). N6-acetyllysine is present on Lys136. The short motif at 139–143 is the Protein interaction element; it reads PVPLS. In terms of domain architecture, CUTL spans 175–248; the sequence is KLEDLPPEQW…WYKHFKKTKD (74 aa). Ser185 bears the Phosphoserine mark. The nuclear matrix targeting sequence (NMTS) stretch occupies residues 224-278; the sequence is YYANVSAAKCQEFGRWYKHFKKTKDMMVEMDSLSELSQQGANHVNFGQQPVPGNT. A Nuclear matrix targeting sequence (NMTS) motif is present at residues 224 to 278; sequence YYANVSAAKCQEFGRWYKHFKKTKDMMVEMDSLSELSQQGANHVNFGQQPVPGNT. The segment covering 266-296 has biased composition (polar residues); it reads HVNFGQQPVPGNTAEQPPSPAQLSHGSQPSV. The tract at residues 266-307 is disordered; the sequence is HVNFGQQPVPGNTAEQPPSPAQLSHGSQPSVRTPLPNLHPGL. The CUT 1 DNA-binding region spans 361 to 448; it reads LEQQVSTNTE…ERDRIYQDER (88 aa). DNA contacts are provided by residues Gln390, 400–410, and Asn425; that span reads RTQGLLSEILR. The interval 450 to 474 is disordered; sequence RSLNAASAMGPAPLLSTPPSRPPQV. Residues 484-571 constitute a DNA-binding region (CUT 2); it reads NGKPENNTMN…ERDAIYEQES (88 aa). Residues 591-650 are disordered; sequence QIQQQQQQQQQQQQQQQPPPPPPQPQPQPQAGPRLPPRQPTVASSAESDEENRQKTRPRT. The span at 593–606 shows a compositional bias: low complexity; sequence QQQQQQQQQQQQQQ. Pro residues predominate over residues 607-629; the sequence is QPPPPPPQPQPQPQAGPRLPPRQ. Ser638 carries the post-translational modification Phosphoserine. Positions 646–705 form a DNA-binding region, homeobox; the sequence is TRPRTKISVEALGILQSFIQDVGLYPDEEAIQTLSAQLDLPKYTIIKFFQNQRYYLKHHG. A Glycyl lysine isopeptide (Lys-Gly) (interchain with G-Cter in SUMO) cross-link involves residue Lys745.

Belongs to the CUT homeobox family. As to quaternary structure, interacts with PCAF. Interacts with sumoylated PML and HDAC1 Tat via the CMP domain. Also interacts with DYNLT3 and POLR2J2. Binds to EP300. Homodimer. Part of the nuclear protein complex gamma-globin promoter and enhancer binding factor (gamma-PE) composed at least of SATB1 and HOXB2. Interaction with CtBP1 when not acetylated stabilizes attachment to DNA and promotes transcription repression. Interacts with CUX1 (via DNA-binding domains); the interaction inhibits the attachment of both proteins to DNA. In terms of processing, sumoylated. Sumoylation promotes cleavage by caspases. Post-translationally, phosphorylated by PKC. Acetylated by PCAF. Phosphorylated form interacts with HDAC1, but unphosphorylated form interacts with PCAF. DNA binding properties are activated by phosphorylation and inactivated by acetylation. In opposition, gene expression is down-regulated by phosphorylation but up-regulated by acetylation. Cleaved at Asp-254 by caspase-3 and caspase-6 during T-cell apoptosis in thymus and during B-cell stimulation. The cleaved forms cannot dimerize and lose transcription regulation function because of impaired DNA and chromatin association. In terms of tissue distribution, expressed in the subventricular zone, rostral migratory stream and in the olfactory bulb (at protein level). Mainly expressed in thymus, spleen, and lymph nodes with a lower level observed in the brain.

It localises to the nucleus. The protein localises to the PML body. Functionally, required for the switching of fetal globin species, and beta- and gamma-globin genes regulation during erythroid differentiation. Plays a role in chromatin organization and nuclear architecture during apoptosis. Crucial silencing factor contributing to the initiation of X inactivation mediated by Xist RNA that occurs during embryogenesis and in lymphoma. Binds to DNA at special AT-rich sequences, the consensus SATB1-binding sequence (CSBS), at nuclear matrix- or scaffold-associated regions. Thought to recognize the sugar-phosphate structure of double-stranded DNA. Transcriptional repressor controlling nuclear and viral gene expression in a phosphorylated and acetylated status-dependent manner, by binding to matrix attachment regions (MARs) of DNA and inducing a local chromatin-loop remodeling. Acts as a docking site for several chromatin remodeling enzymes and also by recruiting corepressors (HDACs) or coactivators (HATs) directly to promoters and enhancers. Modulates genes that are essential in the maturation of the immune T-cell CD8SP from thymocytes. Promotes neuronal differentiation of neural stem/progenitor cells in the adult subventricular zone, possibly by positively regulating the expression of NEUROD1. In Mus musculus (Mouse), this protein is DNA-binding protein SATB1 (Satb1).